Here is a 684-residue protein sequence, read N- to C-terminus: Methionine--tRNA ligase (684 aa).

Residues 17–27 carry the 'HIGH' region motif; the sequence is PYANGKAHVGH. Zn(2+) contacts are provided by C148, C151, C160, and C164. Positions 330-334 match the 'KMSKS' region motif; that stretch reads TFSKS. Position 333 (K333) interacts with ATP. The tRNA-binding domain maps to 582–684; the sequence is DFSKLDIRIG…KETNPGTCIH (103 aa).

The protein belongs to the class-I aminoacyl-tRNA synthetase family. MetG type 1 subfamily. As to quaternary structure, homodimer. It depends on Zn(2+) as a cofactor.

The protein localises to the cytoplasm. The catalysed reaction is tRNA(Met) + L-methionine + ATP = L-methionyl-tRNA(Met) + AMP + diphosphate. Its function is as follows. Is required not only for elongation of protein synthesis but also for the initiation of all mRNA translation through initiator tRNA(fMet) aminoacylation. In Methanococcoides burtonii (strain DSM 6242 / NBRC 107633 / OCM 468 / ACE-M), this protein is Methionine--tRNA ligase.